Consider the following 170-residue polypeptide: Protein-export protein SecB (170 aa).

Belongs to the SecB family. As to quaternary structure, homotetramer, a dimer of dimers. One homotetramer interacts with 1 SecA dimer.

The protein localises to the cytoplasm. One of the proteins required for the normal export of preproteins out of the cell cytoplasm. It is a molecular chaperone that binds to a subset of precursor proteins, maintaining them in a translocation-competent state. It also specifically binds to its receptor SecA. The sequence is that of Protein-export protein SecB from Xanthomonas campestris pv. campestris (strain 8004).